A 251-amino-acid polypeptide reads, in one-letter code: Coenzyme F420:L-glutamate ligase (251 aa).

GTP contacts are provided by residues 9–12 (LPEI), 38–39 (ST), and Lys43. Asp113 contributes to the a divalent metal cation binding site. Position 116 (Asn116) interacts with GTP. Residues Asp149, Thr150, and Glu207 each coordinate a divalent metal cation. A GTP-binding site is contributed by 205 to 212 (AGEGDGGT).

The protein belongs to the CofE family. Homodimer. Mg(2+) is required as a cofactor. Requires Mn(2+) as cofactor. The cofactor is K(+).

The catalysed reaction is oxidized coenzyme F420-0 + GTP + L-glutamate = oxidized coenzyme F420-1 + GDP + phosphate + H(+). It carries out the reaction oxidized coenzyme F420-1 + GTP + L-glutamate = oxidized coenzyme F420-2 + GDP + phosphate + H(+). It functions in the pathway cofactor biosynthesis; coenzyme F420 biosynthesis. Catalyzes the GTP-dependent successive addition of two or more gamma-linked L-glutamates to the L-lactyl phosphodiester of 7,8-didemethyl-8-hydroxy-5-deazariboflavin (F420-0) to form coenzyme F420-0-glutamyl-glutamate (F420-2) or polyglutamated F420 derivatives. This is Coenzyme F420:L-glutamate ligase from Halorubrum lacusprofundi (strain ATCC 49239 / DSM 5036 / JCM 8891 / ACAM 34).